Reading from the N-terminus, the 956-residue chain is DNA ligase 4 (956 aa).

Residues glutamate 307, lysine 309, isoleucine 310, arginine 314, glutamate 371, phenylalanine 409, glutamate 476, lysine 481, lysine 498, and lysine 500 each contribute to the ATP site. The active-site N6-AMP-lysine intermediate is the lysine 309. Glutamate 371 contributes to the Mg(2+) binding site. A Mg(2+)-binding site is contributed by glutamate 476. Residues 666 to 700 (LEDRKRRNAGPGRGAKRLKLANVSSDEDELGTDER) are disordered. BRCT domains lie at 700 to 793 (RPTS…PRNL) and 857 to 956 (PKGM…DYPL).

The protein belongs to the ATP-dependent DNA ligase family. The cofactor is Mg(2+).

The protein resides in the nucleus. It carries out the reaction ATP + (deoxyribonucleotide)n-3'-hydroxyl + 5'-phospho-(deoxyribonucleotide)m = (deoxyribonucleotide)n+m + AMP + diphosphate.. In terms of biological role, DNA ligase involved in DNA non-homologous end joining (NHEJ); required for double-strand break (DSB) repair. This is DNA ligase 4 (LIG4) from Yarrowia lipolytica (strain CLIB 122 / E 150) (Yeast).